A 147-amino-acid polypeptide reads, in one-letter code: Transthyretin (147 aa).

The first 20 residues, 1–20 (MASHRLLLLCLAGLVFVSEA), serve as a signal peptide directing secretion. Residue C30 is modified to Sulfocysteine. K35 is an L-thyroxine binding site. The residue at position 62 (E62) is a 4-carboxyglutamate. The residue at position 72 (S72) is a Phosphoserine. E74 lines the L-thyroxine pocket. N118 carries an N-linked (GlcNAc...) asparagine glycan. An L-thyroxine-binding site is contributed by S137.

Belongs to the transthyretin family. In terms of assembly, homotetramer. Dimer of dimers. In the homotetramer, subunits assemble around a central channel that can accommodate two ligand molecules. Interacts with RBP4. Post-translationally, sulfonation of the reactive cysteine Cys-30 enhances the stability of the native conformation of TTR, avoiding misassembly of the protein leading to amyloid formation. Detected in brain.

The protein resides in the secreted. Functionally, thyroid hormone-binding protein. Probably transports thyroxine from the bloodstream to the brain. This chain is Transthyretin (TTR), found in Pan troglodytes (Chimpanzee).